The primary structure comprises 700 residues: Translation initiation factor IF-2 (700 aa).

The disordered stretch occupies residues 58 to 85 (KKEVKKQKEPSKEKGKSSEQVKVKEKSK). In terms of domain architecture, tr-type G spans 191-365 (PRPPVVTIMG…EMQEIRCIPD (175 aa)). Residues 200–207 (GHVDHGKT) form a G1 region. A GTP-binding site is contributed by 200–207 (GHVDHGKT). The G2 stretch occupies residues 225 to 229 (GITQS). A G3 region spans residues 246 to 249 (DTPG). Residues 246 to 250 (DTPGH) and 300 to 303 (NKID) each bind GTP. Residues 300–303 (NKID) are G4. Residues 337–339 (SAK) form a G5 region.

This sequence belongs to the TRAFAC class translation factor GTPase superfamily. Classic translation factor GTPase family. IF-2 subfamily.

It localises to the cytoplasm. Functionally, one of the essential components for the initiation of protein synthesis. Protects formylmethionyl-tRNA from spontaneous hydrolysis and promotes its binding to the 30S ribosomal subunits. Also involved in the hydrolysis of GTP during the formation of the 70S ribosomal complex. The chain is Translation initiation factor IF-2 from Petrotoga mobilis (strain DSM 10674 / SJ95).